We begin with the raw amino-acid sequence, 354 residues long: Kelch domain-containing protein 8B (354 aa).

8 Kelch repeats span residues 1–31 (MAAG…HQDG), 32–79 (HLLV…VLGK), 81–127 (VLVV…ERDG), 128–175 (MVYA…LHGN), 176–222 (KIYV…MAEG), 224–281 (VFSL…SLGG), 282–329 (NIVA…QAGP), and 331–354 (LFVI…RDGV).

Its subcellular location is the cytoplasm. It is found in the midbody. Functionally, involved in pinching off the separated nuclei at the cleavage furrow and in cytokinesis. Required for mitotic integrity and maintenance of chromosomal stability. Protects cells against mitotic errors, centrosomal amplification, micronucleus formation and aneuploidy. Plays a key role of midbody function involving abscission of the daughter cells during cytokinesis and appropriate chromosomal and nuclear segregation into the daughter cells. The polypeptide is Kelch domain-containing protein 8B (Klhdc8b) (Mus musculus (Mouse)).